The sequence spans 379 residues: Deoxyhypusine synthase (379 aa).

Residues 104–108 (SNLVS), 130–132 (TAG), glutamate 136, and aspartate 237 each bind NAD(+). Spermidine is bound at residue 135–136 (EE). Residue aspartate 242 coordinates spermidine. Glycine 293 serves as a coordination point for NAD(+). Histidine 298 lines the spermidine pocket. 318–319 (TA) provides a ligand contact to NAD(+). Residues 324-326 (GSD) and 333-339 (EAVSWGK) contribute to the spermidine site. Lysine 339 acts as the Nucleophile in catalysis. 352-353 (DA) lines the NAD(+) pocket.

Belongs to the deoxyhypusine synthase family. As to quaternary structure, homotetramer. NAD(+) is required as a cofactor.

The catalysed reaction is [eIF5A protein]-L-lysine + spermidine = [eIF5A protein]-deoxyhypusine + propane-1,3-diamine. It functions in the pathway protein modification; eIF5A hypusination. Catalyzes the NAD-dependent oxidative cleavage of spermidine and the subsequent transfer of the butylamine moiety of spermidine to the epsilon-amino group of a specific lysine residue of the eIF-5A precursor protein to form the intermediate deoxyhypusine residue. Also able to produce homospermidine from putrescine. The chain is Deoxyhypusine synthase (DHS1) from Nicotiana tabacum (Common tobacco).